A 102-amino-acid chain; its full sequence is Signal recognition particle 19 kDa protein (102 aa).

Belongs to the SRP19 family. Part of the signal recognition particle protein translocation system, which is composed of SRP and FtsY. Archaeal SRP consists of a 7S RNA molecule of 300 nucleotides and two protein subunits: SRP54 and SRP19.

It localises to the cytoplasm. In terms of biological role, involved in targeting and insertion of nascent membrane proteins into the cytoplasmic membrane. Binds directly to 7S RNA and mediates binding of the 54 kDa subunit of the SRP. This chain is Signal recognition particle 19 kDa protein, found in Saccharolobus solfataricus (strain ATCC 35092 / DSM 1617 / JCM 11322 / P2) (Sulfolobus solfataricus).